A 1229-amino-acid polypeptide reads, in one-letter code: uncharacterized protein (1229 aa).

An N-terminal signal peptide occupies residues 1–19 (MKYFLLLFLLVLSFTLVES). N-linked (GlcNAc...) asparagine glycans are attached at residues N238, N270, N370, N538, N691, and N701. Residues 678-813 (RMVNFANVME…QWNIDTVKMN (136 aa)) form the Galectin 1 domain. The segment covering 818–829 (HTTTVEPSTPLE) has biased composition (polar residues). The interval 818-903 (HTTTVEPSTP…TLPPTTTPYN (86 aa)) is disordered. The span at 830 to 846 (TASTSQSTPSATLTSTT) shows a compositional bias: low complexity. The span at 847–869 (ENIPSTSKIPETSTTQRPTSPIL) shows a compositional bias: polar residues. The span at 870–901 (TSGATSTSSSTESTTTSPTTSTTTTLPPTTTP) shows a compositional bias: low complexity. 3 N-linked (GlcNAc...) asparagine glycosylation sites follow: N903, N938, and N948. The region spanning 925 to 1059 (RPVVFSRYME…ESTIDTVSMA (135 aa)) is the Galectin 2 domain. The tract at residues 1061 to 1087 (VRPPTTPTTTTSTTTTTTPKLTTTSTL) is disordered. The span at 1067 to 1087 (PTTTTSTTTTTTPKLTTTSTL) shows a compositional bias: low complexity. N-linked (GlcNAc...) asparagine glycosylation is present at N1146.

This is an uncharacterized protein from Caenorhabditis elegans.